A 53-amino-acid chain; its full sequence is UPF0391 membrane protein YtjA (53 aa).

2 helical membrane-spanning segments follow: residues 4 to 24 (WGII…GGLA) and 30 to 48 (AAKI…SLFM).

Belongs to the UPF0391 family.

Its subcellular location is the cell membrane. In Salmonella agona (strain SL483), this protein is UPF0391 membrane protein YtjA.